Reading from the N-terminus, the 560-residue chain is Nuclear receptor subfamily 5 group A member 2 (560 aa).

The disordered stretch occupies residues 21–55 (IASAPGSETRHSPKREEQLREKRAGLPDRHRRPIP). A compositionally biased stretch (basic and acidic residues) spans 28–48 (ETRHSPKREEQLREKRAGLPD). The segment at residues 104-175 (EELCPVCGDK…KCIDVGMKLE (72 aa)) is a DNA-binding region (nuclear receptor). Zn(2+) is bound by residues Cys107, Cys110, Cys124, Cys127, Cys143, Cys149, Cys159, and Cys162. 2 NR C4-type zinc fingers span residues 107 to 127 (CPVCGDKVSGYHYGLLTCESC) and 143 to 167 (CIENQNCQIDKTQRKRCPYCRFKKC). A C-terminal extension (CTE) region spans residues 173–188 (KLEAVRADRMRGGRNK). An FTZ-F1 box motif is present at residues 189–208 (FGPMYKRDRALKQQKKALIR). Residue Lys289 forms a Glycyl lysine isopeptide (Lys-Gly) (interchain with G-Cter in SUMO1) linkage. The 240-residue stretch at 319-558 (SIPHLILELL…NLLIEMLHAK (240 aa)) folds into the NR LBD domain. A phospholipid derivative contacts are provided by Tyr535 and Lys539. The segment at 547–558 (YNNLLIEMLHAK) is AF-2.

It belongs to the nuclear hormone receptor family. NR5 subfamily. As to quaternary structure, monomer; Binds DNA as a monomer. Interacts with nuclear receptor corepressors NR0B1 and NR0B2; repressing NR5A2 nuclear receptor activity. Interacts with nuclear receptor coactivators CTNNB1, PPARGC1A and NCOA2; interaction takes place following ligand-binding and promotes target gene activation. Interacts (when sumoylated) with GPS2; interaction with GPS2 onto hepatic acute phase protein promoters prevents N-Cor corepressor complex dissociation. Interacts with HNF1A. Interacts with GRIP1. In terms of processing, sumoylated by SUMO1 at Lys-289 during the hepatic acute phase response, leading to promote interaction with GPS2 and prevent N-Cor corepressor complex dissociation.

The protein localises to the nucleus. The protein resides in the chromosome. Orphan nuclear receptor that binds DNA as a monomer to the 5'-TCAAGGCCA-3' sequence and controls expression of target genes: regulates key biological processes, such as early embryonic development, cholesterol and bile acid synthesis pathways, as well as liver and pancreas morphogenesis. Ligand-binding causes conformational change which causes recruitment of coactivators, promoting target gene activation. The specific ligand is unknown, but specific phospholipids, such as phosphatidylethanolamine, phosphatidylserine, dilauroyl phosphatidylcholine and diundecanoyl phosphatidylcholine can act as ligand in vitro. Acts as a pioneer transcription factor, which unwraps target DNA from histones and elicits local opening of closed chromatin. Plays a central role during preimplantation stages of embryonic development. Plays a minor role in zygotic genome activation (ZGA) by regulating a small set of two-cell stage genes. Plays a major role in morula development (2-16 cells embryos) by acting as a master regulator at the 8-cell stage, controlling expression of lineage-specifying transcription factors and genes involved in mitosis, telomere maintenance and DNA repair. Zygotic NR5A2 binds to both closed and open chromatin with other transcription factors, often at SINE B1/Alu repeats DNA elements, promoting chromatin accessibility at nearby regulatory regions. Also involved in the epiblast stage of development and embryonic stem cell pluripotency, by promoting expression of POU5F1/OCT4. Regulates other processes later in development, such as formation of connective tissue in lower jaw and middle ear, neural stem cell differentiation, ovarian follicle development and Sertoli cell differentiation. Involved in exocrine pancreas development and acinar cell differentiation. Acts as an essential transcriptional regulator of lipid metabolism. Key regulator of cholesterol 7-alpha-hydroxylase gene (CYP7A) expression in liver. Activates the transcription of CYP2C38. Also acts as a negative regulator of inflammation in different organs, such as intestine, liver and pancreas. Protects against intestinal inflammation via its ability to regulate glucocorticoid production. Plays an anti-inflammatory role during the hepatic acute phase response by acting as a corepressor: inhibits the hepatic acute phase response by preventing dissociation of the N-Cor corepressor complex. Acts as a regulator of immunity by promoting lymphocyte T-cell development, proliferation and effector functions. Also involved in resolution of endoplasmic reticulum stress in the liver. The protein is Nuclear receptor subfamily 5 group A member 2 of Mus musculus (Mouse).